The following is a 446-amino-acid chain: Probable D-serine dehydratase (446 aa).

An N6-(pyridoxal phosphate)lysine modification is found at Lys116.

The protein belongs to the serine/threonine dehydratase family. DsdA subfamily. It depends on pyridoxal 5'-phosphate as a cofactor.

It carries out the reaction D-serine = pyruvate + NH4(+). The sequence is that of Probable D-serine dehydratase from Bacillus anthracis (strain CDC 684 / NRRL 3495).